The primary structure comprises 83 residues: Cytochrome c oxidase subunit 7A2, mitochondrial (83 aa).

A mitochondrion-targeting transit peptide spans methionine 1–histidine 23. Topologically, residues phenylalanine 24–glycine 48 are mitochondrial matrix. Lysine 33 is subject to N6-acetyllysine. The chain crosses the membrane as a helical span at residues threonine 49–alanine 77. Topologically, residues phenylalanine 78–asparagine 83 are mitochondrial intermembrane.

This sequence belongs to the cytochrome c oxidase VIIa family. As to quaternary structure, component of the cytochrome c oxidase (complex IV, CIV), a multisubunit enzyme composed of 14 subunits. The complex is composed of a catalytic core of 3 subunits MT-CO1, MT-CO2 and MT-CO3, encoded in the mitochondrial DNA, and 11 supernumerary subunits COX4I, COX5A, COX5B, COX6A, COX6B, COX6C, COX7A, COX7B, COX7C, COX8 and NDUFA4, which are encoded in the nuclear genome. The complex exists as a monomer or a dimer and forms supercomplexes (SCs) in the inner mitochondrial membrane with NADH-ubiquinone oxidoreductase (complex I, CI) and ubiquinol-cytochrome c oxidoreductase (cytochrome b-c1 complex, complex III, CIII), resulting in different assemblies (supercomplex SCI(1)III(2)IV(1) and megacomplex MCI(2)III(2)IV(2)). Interacts with PET100.

Its subcellular location is the mitochondrion inner membrane. It functions in the pathway energy metabolism; oxidative phosphorylation. Its function is as follows. Component of the cytochrome c oxidase, the last enzyme in the mitochondrial electron transport chain which drives oxidative phosphorylation. The respiratory chain contains 3 multisubunit complexes succinate dehydrogenase (complex II, CII), ubiquinol-cytochrome c oxidoreductase (cytochrome b-c1 complex, complex III, CIII) and cytochrome c oxidase (complex IV, CIV), that cooperate to transfer electrons derived from NADH and succinate to molecular oxygen, creating an electrochemical gradient over the inner membrane that drives transmembrane transport and the ATP synthase. Cytochrome c oxidase is the component of the respiratory chain that catalyzes the reduction of oxygen to water. Electrons originating from reduced cytochrome c in the intermembrane space (IMS) are transferred via the dinuclear copper A center (CU(A)) of subunit 2 and heme A of subunit 1 to the active site in subunit 1, a binuclear center (BNC) formed by heme A3 and copper B (CU(B)). The BNC reduces molecular oxygen to 2 water molecules using 4 electrons from cytochrome c in the IMS and 4 protons from the mitochondrial matrix. This is Cytochrome c oxidase subunit 7A2, mitochondrial (Cox7a2) from Rattus norvegicus (Rat).